The following is a 55-amino-acid chain: Small ribosomal subunit protein eS31 (55 aa).

Zn(2+)-binding residues include cysteine 27, cysteine 30, cysteine 45, and cysteine 48. The C4-type zinc-finger motif lies at 27–48 (CSRCGKGFFMAQHKDRRSCGKC).

It belongs to the eukaryotic ribosomal protein eS31 family. As to quaternary structure, part of the 30S ribosomal subunit. Zn(2+) is required as a cofactor.

The chain is Small ribosomal subunit protein eS31 from Cenarchaeum symbiosum (strain A).